Here is a 231-residue protein sequence, read N- to C-terminus: MFLVGLTGGIASGKSSVIQVFQQLGCAVIDVDVMARHVVQPGYPAHRRIVEVFGTEVLLENGDINRKVLGDLIFNQPDRRQLLNAITHPEIRKEMMKETFKYFLRGYRYVILDIPLLFETKKLLKYMKHTVVVYCDRDTQLARLMRRNSLNRKDAEARINAQLPLTDKARMARHVLDNSGEWSVTKRQVILLHTELERSLEYLPLRFGVLTGLAAIASLLYLLTHYLLPYA.

In terms of domain architecture, DPCK spans L3–F207. G8 to S15 contributes to the ATP binding site.

The protein belongs to the CoaE family.

This is Dephospho-CoA kinase domain-containing protein (DCAKD) from Homo sapiens (Human).